A 482-amino-acid chain; its full sequence is Malvidin galactosylase UGT88C3 (482 aa).

Histidine 16 serves as the catalytic Proton acceptor. Aspartate 117 acts as the Charge relay in catalysis. UDP-binding residues include serine 279, tryptophan 345, alanine 349, histidine 366, asparagine 370, serine 371, and glutamate 374.

Belongs to the UDP-glycosyltransferase family. As to expression, highly expressed in leaves, sheaths, pistils and embryos, observed in stems, stem nodes and panicles, and present at low levels in roots.

The protein resides in the endoplasmic reticulum. It is found in the nucleus. It catalyses the reaction malvidin + UDP-alpha-D-galactose = malvidin 3-O-beta-D-galactoside + UDP + H(+). It participates in pigment biosynthesis; anthocyanin biosynthesis. Functionally, UDP-glycosyltransferase which uses UDP-galactose and malvidin as substrates to catalyze the biosynthesis of malvidin 3-O-galactoside, an anthocyanin conferring purple pigmentation. This Oryza sativa subsp. japonica (Rice) protein is Malvidin galactosylase UGT88C3.